The sequence spans 360 residues: Histidinol-phosphate aminotransferase (360 aa).

Lys-218 carries the N6-(pyridoxal phosphate)lysine modification.

Belongs to the class-II pyridoxal-phosphate-dependent aminotransferase family. Histidinol-phosphate aminotransferase subfamily. In terms of assembly, homodimer. It depends on pyridoxal 5'-phosphate as a cofactor.

It carries out the reaction L-histidinol phosphate + 2-oxoglutarate = 3-(imidazol-4-yl)-2-oxopropyl phosphate + L-glutamate. The protein operates within amino-acid biosynthesis; L-histidine biosynthesis; L-histidine from 5-phospho-alpha-D-ribose 1-diphosphate: step 7/9. In Chlorobium phaeovibrioides (strain DSM 265 / 1930) (Prosthecochloris vibrioformis (strain DSM 265)), this protein is Histidinol-phosphate aminotransferase.